The primary structure comprises 689 residues: Glycine--tRNA ligase beta subunit (689 aa).

It belongs to the class-II aminoacyl-tRNA synthetase family. In terms of assembly, tetramer of two alpha and two beta subunits.

The protein resides in the cytoplasm. It catalyses the reaction tRNA(Gly) + glycine + ATP = glycyl-tRNA(Gly) + AMP + diphosphate. The polypeptide is Glycine--tRNA ligase beta subunit (Enterobacter sp. (strain 638)).